The sequence spans 394 residues: MAKAKFERTKPHVNIGTIGHVDHGKTSLTAAITIVLAKTGGAQATAYDQIDAAPEEKERGITISTAHVEYETKNRHYAHVDCPGHADYVKNMITGAAQMDGAILVVSAADGPMPQTREHILLAKQVGVPAMVVFLNKVDMVDDPDLLELVEMEVRELLSKYGFPGDEIPIIKGSALQALEGKPEGEEAINELMDAVDSYIPQPVELRINPFLMPIEDVFSISGRGTVVTGRVESGIIKVGDEIEIVGLKDTQKTTCTGVEMFRKLLDEGQAGDNVGILLRGTKREEVERGQVLAKPGSIKPHDKFEAEVYVLSKEEGGRHTPFTNDYRPQFYFRTTDVTGTIKLPADKQMVMPGDNATFTVELIKPIAMQEGLKFSIREGGRTVGAGVVTKINN.

A tr-type G domain is found at 10–204 (KPHVNIGTIG…AVDSYIPQPV (195 aa)). Residues 19-26 (GHVDHGKT) form a G1 region. Residue 19–26 (GHVDHGKT) participates in GTP binding. Residue Thr-26 coordinates Mg(2+). The segment at 60-64 (GITIS) is G2. The G3 stretch occupies residues 81 to 84 (DCPG). GTP-binding positions include 81 to 85 (DCPGH) and 136 to 139 (NKVD). The tract at residues 136-139 (NKVD) is G4. The segment at 174–176 (SAL) is G5.

The protein belongs to the TRAFAC class translation factor GTPase superfamily. Classic translation factor GTPase family. EF-Tu/EF-1A subfamily. Monomer.

Its subcellular location is the cytoplasm. The catalysed reaction is GTP + H2O = GDP + phosphate + H(+). In terms of biological role, GTP hydrolase that promotes the GTP-dependent binding of aminoacyl-tRNA to the A-site of ribosomes during protein biosynthesis. This Rickettsia rhipicephali protein is Elongation factor Tu.